We begin with the raw amino-acid sequence, 968 residues long: RNA polymerase-associated protein RapA (968 aa).

Residues 163-332 (EVGRRYAPRV…FARLRLLDPD (170 aa)) form the Helicase ATP-binding domain. 176–183 (DEVGLGKT) is an ATP binding site. The short motif at 278–281 (DEAH) is the DEAH box element. Residues 491-655 (RVDWLIEFLK…EFAEELLNVL (165 aa)) enclose the Helicase C-terminal domain.

Belongs to the SNF2/RAD54 helicase family. RapA subfamily. In terms of assembly, interacts with the RNAP. Has a higher affinity for the core RNAP than for the holoenzyme. Its ATPase activity is stimulated by binding to RNAP.

Functionally, transcription regulator that activates transcription by stimulating RNA polymerase (RNAP) recycling in case of stress conditions such as supercoiled DNA or high salt concentrations. Probably acts by releasing the RNAP, when it is trapped or immobilized on tightly supercoiled DNA. Does not activate transcription on linear DNA. Probably not involved in DNA repair. The polypeptide is RNA polymerase-associated protein RapA (Shewanella oneidensis (strain ATCC 700550 / JCM 31522 / CIP 106686 / LMG 19005 / NCIMB 14063 / MR-1)).